We begin with the raw amino-acid sequence, 379 residues long: Succinyl-diaminopimelate desuccinylase (379 aa).

His-70 serves as a coordination point for Zn(2+). Asp-72 is an active-site residue. Asp-103 serves as a coordination point for Zn(2+). Glu-137 acts as the Proton acceptor in catalysis. Residues Glu-138, Glu-166, and His-352 each coordinate Zn(2+).

Belongs to the peptidase M20A family. DapE subfamily. Homodimer. Requires Zn(2+) as cofactor. Co(2+) is required as a cofactor.

It carries out the reaction N-succinyl-(2S,6S)-2,6-diaminopimelate + H2O = (2S,6S)-2,6-diaminopimelate + succinate. The protein operates within amino-acid biosynthesis; L-lysine biosynthesis via DAP pathway; LL-2,6-diaminopimelate from (S)-tetrahydrodipicolinate (succinylase route): step 3/3. In terms of biological role, catalyzes the hydrolysis of N-succinyl-L,L-diaminopimelic acid (SDAP), forming succinate and LL-2,6-diaminopimelate (DAP), an intermediate involved in the bacterial biosynthesis of lysine and meso-diaminopimelic acid, an essential component of bacterial cell walls. This Shewanella baltica (strain OS155 / ATCC BAA-1091) protein is Succinyl-diaminopimelate desuccinylase.